The following is a 226-amino-acid chain: V-type proton ATPase subunit E (226 aa).

This sequence belongs to the V-ATPase E subunit family. In terms of assembly, V-ATPase is a heteromultimeric enzyme composed of a peripheral catalytic V1 complex (components A to H) attached to an integral membrane V0 proton pore complex (components: a, c, c', c'' and d).

Functionally, subunit of the peripheral V1 complex of vacuolar ATPase essential for assembly or catalytic function. V-ATPase is responsible for acidifying a variety of intracellular compartments in eukaryotic cells. This is V-type proton ATPase subunit E (VATE) from Mesembryanthemum crystallinum (Common ice plant).